A 55-amino-acid chain; its full sequence is ATP synthase protein 8 (55 aa).

A helical membrane pass occupies residues 7 to 24; that stretch reads NPWLFIMLMSWLTFSLII. The segment at 35–55 is disordered; sequence NPPSNKTPTTTKTSPWTWPWT. The span at 37 to 55 shows a compositional bias: low complexity; the sequence is PSNKTPTTTKTSPWTWPWT.

The protein belongs to the ATPase protein 8 family. F-type ATPases have 2 components, CF(1) - the catalytic core - and CF(0) - the membrane proton channel.

The protein resides in the mitochondrion membrane. In terms of biological role, mitochondrial membrane ATP synthase (F(1)F(0) ATP synthase or Complex V) produces ATP from ADP in the presence of a proton gradient across the membrane which is generated by electron transport complexes of the respiratory chain. F-type ATPases consist of two structural domains, F(1) - containing the extramembraneous catalytic core and F(0) - containing the membrane proton channel, linked together by a central stalk and a peripheral stalk. During catalysis, ATP synthesis in the catalytic domain of F(1) is coupled via a rotary mechanism of the central stalk subunits to proton translocation. Part of the complex F(0) domain. Minor subunit located with subunit a in the membrane. The protein is ATP synthase protein 8 (MT-ATP8) of Corythaeola cristata (Great blue turaco).